The primary structure comprises 133 residues: Ribonuclease VapC28 (133 aa).

The PINc domain occupies 1-124 (MIVDTSAIIA…LWKGNDFGHT (124 aa)). 2 residues coordinate Mg(2+): Asp4 and Asp100.

Belongs to the PINc/VapC protein family. Mg(2+) is required as a cofactor.

Toxic component of a type II toxin-antitoxin (TA) system. An RNase. Upon expression in M.smegmatis inhibits colony formation. Its toxic effect is neutralized by coexpression with cognate antitoxin VapB28. This Mycobacterium tuberculosis (strain ATCC 25618 / H37Rv) protein is Ribonuclease VapC28.